The primary structure comprises 156 residues: Protein LlR18A (156 aa).

Trans-zeatin is bound by residues Asn-8 and Asp-28. Ca(2+) is bound by residues Pro-32 and Ile-38. Positions 54, 133, and 136 each coordinate trans-zeatin.

This sequence belongs to the BetVI family. In terms of tissue distribution, expressed constitutively in roots.

Its subcellular location is the cytoplasm. It localises to the cytosol. Functionally, class II ribonuclease (RNase). Binds to cytokinins. Interacts with melatonin. This chain is Protein LlR18A (LLR18A), found in Lupinus luteus (European yellow lupine).